The chain runs to 377 residues: Opsin-2 (377 aa).

Residues 1 to 57 (MNNQSENYYHGAQFEALKSAGAIEMLGDGLTGDDLAAIPEHWLSYPAPPASAHTALA) are Extracellular-facing. Residue Asn3 is glycosylated (N-linked (GlcNAc...) asparagine). The chain crosses the membrane as a helical span at residues 58 to 78 (LLYIFFTFAALVGNGMVIFIF). Residues 79–89 (STTKSLRTSSN) are Cytoplasmic-facing. The helical transmembrane segment at 90 to 110 (FLVLNLAILDFIMMAKAPIFI) threads the bilayer. Over 111–126 (YNSAMRGFAVGTVGCQ) the chain is Extracellular. Cysteines 125 and 202 form a disulfide. A helical membrane pass occupies residues 127–146 (IFALMGAYSGIGAGMTNACI). Topologically, residues 147–166 (AYDRHSTITRPLDGRLSEGK) are cytoplasmic. A helical membrane pass occupies residues 167–187 (VLLMVAFVWIYSTPWALLPLL). Residues 188 to 214 (KIWGRYVPEGYLTSCSFDYLTNTFDTK) are Extracellular-facing. Residues 215–235 (LFVACIFTCSYVFPMSLIIYF) traverse the membrane as a helical segment. The Cytoplasmic segment spans residues 236-283 (YSGIVKQVFAHEAALREQAKKMNVESLRANQGGSSESAEIRIAKAALT). The chain crosses the membrane as a helical span at residues 284–304 (VCFLFVASWTPYGVMALIGAF). Residues 305-314 (GNQQLLTPGV) are Extracellular-facing. A helical membrane pass occupies residues 315–335 (TMIPAVACKAVACISPWVYAI). The Cytoplasmic segment spans residues 336-377 (RHPMYRQELQRRMPWLQIDEPDDTVSTATSNTTNSAPPAATA). A disordered region spans residues 355 to 377 (EPDDTVSTATSNTTNSAPPAATA). A compositionally biased stretch (low complexity) spans 361–377 (STATSNTTNSAPPAATA).

It belongs to the G-protein coupled receptor 1 family. Opsin subfamily. In terms of tissue distribution, in the retina, expression is essentially uniformly distributed, but a higher level is seen in the dorsal region of the retina and in the dorsal rim retinulae.

The protein localises to the membrane. Visual pigments are the light-absorbing molecules that mediate vision. They consist of an apoprotein, opsin, covalently linked to cis-retinal. May play a role in photoperiodic photoreception. This chain is Opsin-2 (OP2), found in Manduca sexta (Tobacco hawkmoth).